The chain runs to 444 residues: Phosphoglucosamine mutase (444 aa).

Ser104 functions as the Phosphoserine intermediate in the catalytic mechanism. Mg(2+) is bound by residues Ser104, Asp243, Asp245, and Asp247. At Ser104 the chain carries Phosphoserine.

This sequence belongs to the phosphohexose mutase family. Mg(2+) serves as cofactor. Post-translationally, activated by phosphorylation.

The catalysed reaction is alpha-D-glucosamine 1-phosphate = D-glucosamine 6-phosphate. Functionally, catalyzes the conversion of glucosamine-6-phosphate to glucosamine-1-phosphate. The protein is Phosphoglucosamine mutase of Neisseria meningitidis serogroup C / serotype 2a (strain ATCC 700532 / DSM 15464 / FAM18).